The following is a 463-amino-acid chain: Ribosomal protein uS12 methylthiotransferase RimO (463 aa).

Residues 15 to 130 (PKVGMVSLGC…VMQAVHSHLP (116 aa)) form the MTTase N-terminal domain. [4Fe-4S] cluster-binding residues include C24, C60, C89, C161, C165, and C168. The region spanning 147–392 (LTPRHYAYLK…MEVAEEVSAA (246 aa)) is the Radical SAM core domain. Residues 395 to 463 (ARKIGKTLKV…ADSHDLWGEV (69 aa)) form the TRAM domain.

It belongs to the methylthiotransferase family. RimO subfamily. The cofactor is [4Fe-4S] cluster.

It is found in the cytoplasm. It carries out the reaction L-aspartate(89)-[ribosomal protein uS12]-hydrogen + (sulfur carrier)-SH + AH2 + 2 S-adenosyl-L-methionine = 3-methylsulfanyl-L-aspartate(89)-[ribosomal protein uS12]-hydrogen + (sulfur carrier)-H + 5'-deoxyadenosine + L-methionine + A + S-adenosyl-L-homocysteine + 2 H(+). Its function is as follows. Catalyzes the methylthiolation of an aspartic acid residue of ribosomal protein uS12. This chain is Ribosomal protein uS12 methylthiotransferase RimO, found in Burkholderia pseudomallei (strain 668).